Reading from the N-terminus, the 385-residue chain is Probable alpha-galactosidase (385 aa).

An N-terminal signal peptide occupies residues 1–19; sequence MMKIAATLLATIALATVNA. Disulfide bonds link Cys40/Cys72 and Cys119/Cys149. Asp147 functions as the Nucleophile in the catalytic mechanism. Residue 180-184 participates in substrate binding; that stretch reads DWGYE. The active-site Proton donor is Asp202.

Belongs to the glycosyl hydrolase 27 family.

The catalysed reaction is Hydrolysis of terminal, non-reducing alpha-D-galactose residues in alpha-D-galactosides, including galactose oligosaccharides, galactomannans and galactolipids.. This is Probable alpha-galactosidase (melA) from Dictyostelium discoideum (Social amoeba).